The chain runs to 427 residues: Gamma-glutamyl phosphate reductase (427 aa).

Belongs to the gamma-glutamyl phosphate reductase family.

Its subcellular location is the cytoplasm. The enzyme catalyses L-glutamate 5-semialdehyde + phosphate + NADP(+) = L-glutamyl 5-phosphate + NADPH + H(+). It functions in the pathway amino-acid biosynthesis; L-proline biosynthesis; L-glutamate 5-semialdehyde from L-glutamate: step 2/2. In terms of biological role, catalyzes the NADPH-dependent reduction of L-glutamate 5-phosphate into L-glutamate 5-semialdehyde and phosphate. The product spontaneously undergoes cyclization to form 1-pyrroline-5-carboxylate. The polypeptide is Gamma-glutamyl phosphate reductase (Brucella canis (strain ATCC 23365 / NCTC 10854 / RM-666)).